The sequence spans 479 residues: Anaerobic nitric oxide reductase flavorubredoxin (479 aa).

A zinc metallo-hydrolase region spans residues 30–210 (LRGSSYNSYL…PFSRLVTPKI (181 aa)). Fe cation is bound by residues His79, Glu81, Asp83, His147, Asp166, and His227. The region spanning 254–393 (ITIFYDTMSN…LCREHGREIA (140 aa)) is the Flavodoxin-like domain. Residues 260 to 264 (TMSNN) and 342 to 369 (AFGSHGWSGGAVDRLSTRLQDAGFEMSL) contribute to the FMN site. The Rubredoxin-like domain occupies 423–474 (GPRMQCSVCQWIYDPAKGEPMQDVAPGTPWSEVPDNFLCPECSLGKDVFDEL). Fe cation-binding residues include Cys428, Cys431, Cys461, and Cys464.

It in the N-terminal section; belongs to the zinc metallo-hydrolase group 3 family. Homotetramer. It depends on Fe cation as a cofactor. The cofactor is FMN.

The protein resides in the cytoplasm. The protein operates within nitrogen metabolism; nitric oxide reduction. Its function is as follows. Anaerobic nitric oxide reductase; uses NADH to detoxify nitric oxide (NO), protecting several 4Fe-4S NO-sensitive enzymes. Has at least 2 reductase partners, only one of which (NorW, flavorubredoxin reductase) has been identified. NO probably binds to the di-iron center; electrons enter from the NorW at rubredoxin and are transferred sequentially to the FMN center and the di-iron center. Also able to function as an aerobic oxygen reductase. In Shigella sonnei (strain Ss046), this protein is Anaerobic nitric oxide reductase flavorubredoxin.